Consider the following 122-residue polypeptide: Large ribosomal subunit protein uL14 (122 aa).

The protein belongs to the universal ribosomal protein uL14 family. As to quaternary structure, part of the 50S ribosomal subunit. Forms a cluster with proteins L3 and L19. In the 70S ribosome, L14 and L19 interact and together make contacts with the 16S rRNA in bridges B5 and B8.

Functionally, binds to 23S rRNA. Forms part of two intersubunit bridges in the 70S ribosome. This Clostridium kluyveri (strain ATCC 8527 / DSM 555 / NBRC 12016 / NCIMB 10680 / K1) protein is Large ribosomal subunit protein uL14.